Reading from the N-terminus, the 99-residue chain is Integration host factor subunit alpha (99 aa).

Residues 52-73 (FGNFTLRDKPQRPGRNPKTGEE) form a disordered region.

The protein belongs to the bacterial histone-like protein family. As to quaternary structure, heterodimer of an alpha and a beta chain.

Functionally, this protein is one of the two subunits of integration host factor, a specific DNA-binding protein that functions in genetic recombination as well as in transcriptional and translational control. This chain is Integration host factor subunit alpha, found in Legionella pneumophila subsp. pneumophila (strain Philadelphia 1 / ATCC 33152 / DSM 7513).